The sequence spans 119 residues: Large ribosomal subunit protein uL18 (119 aa).

The protein belongs to the universal ribosomal protein uL18 family. Part of the 50S ribosomal subunit; part of the 5S rRNA/L5/L18/L25 subcomplex. Contacts the 5S and 23S rRNAs.

In terms of biological role, this is one of the proteins that bind and probably mediate the attachment of the 5S RNA into the large ribosomal subunit, where it forms part of the central protuberance. The chain is Large ribosomal subunit protein uL18 from Micrococcus luteus (Micrococcus lysodeikticus).